Here is a 380-residue protein sequence, read N- to C-terminus: NF-kappa-B inhibitor-like protein 1 (380 aa).

The disordered stretch occupies residues 1-34 (MSNPSPQVPEEEASTSVCRPKSSMASTSRRQRRE). ANK repeat units follow at residues 64–93 (GQPPPLHRACARHDAPALCLLLRLGADPAH) and 97–133 (HGDTALHAAARQGPDAYTDFFLPLLSRCPSAMGIKNK). Disordered stretches follow at residues 131–166 (KNKDGETPGQILGWGPPWDSAEEEEDDASKEREWRQ) and 185–293 (GDAS…RGSL). Ser-150 is modified (phosphoserine). The segment covering 237–286 (QQEEEQRLFRERARAKEEELRESRARRAQEALGDREPKPTRAGPREEHPR) has biased composition (basic and acidic residues).

In terms of assembly, interacts with CACTIN (via N-terminal domain); the interaction occurs in a pro-inflammatory-independent manner.

It is found in the nucleus. Functionally, involved in the regulation of innate immune response. Acts as negative regulator of Toll-like receptor and interferon-regulatory factor (IRF) signaling pathways. Contributes to the negative regulation of transcriptional activation of NF-kappa-B target genes in response to endogenous pro-inflammatory stimuli. In Pan troglodytes (Chimpanzee), this protein is NF-kappa-B inhibitor-like protein 1 (NFKBIL1).